The sequence spans 402 residues: 1-deoxy-D-xylulose 5-phosphate reductoisomerase (402 aa).

The NADPH site is built by Thr-10, Gly-11, Ser-12, Ile-13, Gly-36, Arg-37, Asn-38, and Asn-124. 1-deoxy-D-xylulose 5-phosphate is bound at residue Lys-125. Glu-126 is a binding site for NADPH. Residue Asp-150 participates in Mn(2+) binding. Positions 151, 152, 186, and 209 each coordinate 1-deoxy-D-xylulose 5-phosphate. Glu-152 contacts Mn(2+). Gly-215 contributes to the NADPH binding site. 4 residues coordinate 1-deoxy-D-xylulose 5-phosphate: Ser-222, Asn-227, Lys-228, and Glu-231. Mn(2+) is bound at residue Glu-231.

The protein belongs to the DXR family. Mg(2+) is required as a cofactor. Requires Mn(2+) as cofactor.

The enzyme catalyses 2-C-methyl-D-erythritol 4-phosphate + NADP(+) = 1-deoxy-D-xylulose 5-phosphate + NADPH + H(+). It functions in the pathway isoprenoid biosynthesis; isopentenyl diphosphate biosynthesis via DXP pathway; isopentenyl diphosphate from 1-deoxy-D-xylulose 5-phosphate: step 1/6. Its activity is regulated as follows. Inhibited by fosmidomycin. In terms of biological role, catalyzes the NADPH-dependent rearrangement and reduction of 1-deoxy-D-xylulose-5-phosphate (DXP) to 2-C-methyl-D-erythritol 4-phosphate (MEP). This is 1-deoxy-D-xylulose 5-phosphate reductoisomerase from Synechococcus sp. (strain ATCC 27144 / PCC 6301 / SAUG 1402/1) (Anacystis nidulans).